Here is an 860-residue protein sequence, read N- to C-terminus: JmjC domain-containing histone demethylation protein 1 (860 aa).

Disordered regions lie at residues 1-45, 117-212, and 408-440; these read MSEQ…EEGK, STSP…PKRK, and DVKE…GGEI. A PHD-type zinc finger spans residues 23-116; that stretch reads PEPCPLCRET…KWYCAPCLAR (94 aa). Composition is skewed to basic and acidic residues over residues 183–192 and 408–433; these read IDMKSEREQQ and DVKE…HLTE. The region spanning 416 to 579 is the JmjC domain; sequence NDSREGSEIR…TQLRLRQIEI (164 aa). Residue threonine 471 participates in substrate binding. The Fe cation site is built by histidine 474 and aspartate 476. Residue lysine 491 participates in substrate binding. Histidine 547 is a Fe cation binding site. 2 disordered regions span residues 744–795 and 837–860; these read HPPA…ANEN and GPKL…DIDH. Residues 750 to 763 show a composition bias toward polar residues; the sequence is ENRQSPQIETTTVQ. Residues 767-795 show a composition bias toward low complexity; it reads PSTSSSDAISGSGPGASPGASANGGANEN.

This sequence belongs to the JHDM1 histone demethylase family. Requires Fe(2+) as cofactor.

The protein resides in the nucleus. It carries out the reaction N(6),N(6)-dimethyl-L-lysyl(36)-[histone H3] + 2 2-oxoglutarate + 2 O2 = L-lysyl(36)-[histone H3] + 2 formaldehyde + 2 succinate + 2 CO2. Its function is as follows. Histone demethylase that specifically demethylates 'Lys-36' of histone H3, thereby playing a central role in histone code. This Cryptococcus neoformans var. neoformans serotype D (strain JEC21 / ATCC MYA-565) (Filobasidiella neoformans) protein is JmjC domain-containing histone demethylation protein 1 (JHD1).